Here is a 65-residue protein sequence, read N- to C-terminus: Large ribosomal subunit protein bL35 (65 aa).

Over residues 1–10 the composition is skewed to basic and acidic residues; the sequence is MPKMKTDRGA. The tract at residues 1–24 is disordered; it reads MPKMKTDRGAAKRFKKTGSGGFKC.

Belongs to the bacterial ribosomal protein bL35 family.

In Tolumonas auensis (strain DSM 9187 / NBRC 110442 / TA 4), this protein is Large ribosomal subunit protein bL35.